The primary structure comprises 509 residues: 2,3-bisphosphoglycerate-independent phosphoglycerate mutase (509 aa).

Residues Asp14 and Ser64 each coordinate Mn(2+). Ser64 serves as the catalytic Phosphoserine intermediate. Residues His125, Arg155–Asp156, Arg187, Arg193, Arg259–Arg262, and Lys332 each bind substrate. 5 residues coordinate Mn(2+): Asp399, His403, Asp440, His441, and His459.

Belongs to the BPG-independent phosphoglycerate mutase family. As to quaternary structure, monomer. The cofactor is Mn(2+).

The catalysed reaction is (2R)-2-phosphoglycerate = (2R)-3-phosphoglycerate. The protein operates within carbohydrate degradation; glycolysis; pyruvate from D-glyceraldehyde 3-phosphate: step 3/5. In terms of biological role, catalyzes the interconversion of 2-phosphoglycerate and 3-phosphoglycerate. The protein is 2,3-bisphosphoglycerate-independent phosphoglycerate mutase of Psychromonas ingrahamii (strain DSM 17664 / CCUG 51855 / 37).